We begin with the raw amino-acid sequence, 355 residues long: N6-Methyl-AMP deaminase (355 aa).

2 residues coordinate Zn(2+): H24 and H26. N(6)-methyl-AMP is bound by residues H26, N28, H74, 106–109 (STPR), D148, and G181. A Zn(2+)-binding site is contributed by H208. N(6)-methyl-AMP contacts are provided by E211, D293, and D294. The active-site Proton donor is the E211. D293 is a binding site for Zn(2+).

It belongs to the metallo-dependent hydrolases superfamily. Adenosine and AMP deaminases family. As to quaternary structure, monomer. Zn(2+) is required as a cofactor.

It carries out the reaction N(6)-methyl-AMP + H2O + H(+) = IMP + methylamine. In terms of biological role, catalyzes the hydrolysis of the free cytosolic methylated adenosine nucleotide N(6)-methyl-AMP (N6-mAMP) to produce inositol monophosphate (IMP) and methylamine. Is required for the catabolism of cytosolic N6-mAMP, which is derived from the degradation of mRNA containing N6-methylated adenine (m6A). Catalyzes the removal of different alkyl groups not only from N6-substituted purine or 2-aminopurine nucleoside monophosphates but also from O6-substituted compounds in vitro. This chain is N6-Methyl-AMP deaminase, found in Homo sapiens (Human).